Here is a 992-residue protein sequence, read N- to C-terminus: GYF domain-containing protein mpd2 (992 aa).

Disordered stretches follow at residues 24–105 (ANNS…SANP), 172–245 (GTAS…NVAS), and 289–316 (FSQS…MSIR). 2 stretches are compositionally biased toward polar residues: residues 25–58 (NNSS…SSHI) and 75–104 (KSGN…SSAN). A Phosphoserine modification is found at serine 175. Over residues 193 to 205 (SPSSFSQSRSAVS) the composition is skewed to low complexity. Polar residues-rich tracts occupy residues 214 to 237 (TLQQ…SNQP) and 301 to 315 (FPTN…SMSI). Threonine 318 is subject to Phosphothreonine. Serine 320 bears the Phosphoserine mark. Residues 336–359 (KENASQPVAPSASQREHSAVNSPA) form a disordered region. The segment covering 337–348 (ENASQPVAPSAS) has biased composition (polar residues). Residues 386–434 (LLHWLYKDPQNNVQGPFTGVDMHQWYRAGYFPLGLPIKRLEEEEYYSLA) enclose the GYF domain. Disordered stretches follow at residues 467-486 (DLPL…GGNK), 496-563 (EVSN…NESL), 576-637 (SEET…HLPS), 651-682 (SEAL…WAKV), 697-729 (EKQN…LASG), 760-794 (AELA…PSSN), 818-859 (VGPG…SSKL), and 940-992 (TGKD…KKRV). 2 stretches are compositionally biased toward polar residues: residues 474 to 483 (LPESSEQNRG) and 507 to 532 (ANSL…NEDS). Residue serine 509 is modified to Phosphoserine. 2 stretches are compositionally biased toward basic and acidic residues: residues 549 to 561 (MYEK…HHNE) and 577 to 595 (EETK…ESKR). Over residues 596–606 (LSTGVQKQSPA) the composition is skewed to polar residues. Serine 604 and serine 637 each carry phosphoserine. 2 stretches are compositionally biased toward polar residues: residues 658–676 (EKSN…SKTG) and 707–721 (VASN…NAKA). Serine 775, serine 829, serine 838, and serine 840 each carry phosphoserine. Polar residues-rich tracts occupy residues 825–859 (VNQQ…SSKL) and 943–966 (DGQQ…SQVV).

The protein belongs to the SMY2/mpd2 family.

The protein localises to the cytoplasm. In terms of biological role, has a role in mRNA export from the nucleus. This is GYF domain-containing protein mpd2 (mpd2) from Schizosaccharomyces pombe (strain 972 / ATCC 24843) (Fission yeast).